The primary structure comprises 203 residues: Ras-related protein Rab-13 (203 aa).

S17, G18, G20, K21, T22, C23, and T40 together coordinate GTP. Residue T22 coordinates Mg(2+). The short motif at 31-45 is the Switch 1 element; that stretch reads DNFNSTYISTIGIDF. Residue T40 participates in Mg(2+) binding. Residues K46 and K58 each participate in a glycyl lysine isopeptide (Lys-Gly) (interchain with G-Cter in ubiquitin) cross-link. D63 contributes to the Mg(2+) binding site. Residues 63–80 carry the Switch 2 motif; it reads DTAGQERFKTITTAYYRG. Residues G66, N121, K122, D124, A152, and K153 each contribute to the GTP site. Residues 173–203 form a disordered region; it reads TGGRRSGNSSKPSSTDLKVSDKKNSNKCSLG. Residue S178 is modified to Phosphoserine. Residues 178–189 are compositionally biased toward polar residues; the sequence is SGNSSKPSSTDL. C200 carries the cysteine methyl ester modification. C200 carries S-geranylgeranyl cysteine lipidation. Positions 201-203 are cleaved as a propeptide — removed in mature form; the sequence is SLG.

The protein belongs to the small GTPase superfamily. Rab family. As to quaternary structure, interacts (GTP-bound form) with MICALL2; competes with RAB8A and is involved in tight junctions assembly. Interacts (GTP-bound form) with MICALL1. Interacts (GTP-bound form) with MICAL1, MICAL3, MICALCL, EHBP1 and EHBP1L1; ternary complexes of RAB8A, RAB13 and either MICAL1 or EHBP1L1 are possible. Interacts with PRKACA; downstream effector of RAB13 involved in tight junction assembly. Interacts with GRB2; may recruit RAB13 to the leading edge of migrating endothelial cells where it can activate RHOA. Interacts (isoprenylated form) with PDE6D; dissociates RAB13 from membranes. Interacts with BICDL2/BICDR2. Interacts with LEPROT and LEPROTL1. Mg(2+) is required as a cofactor. Ubiquitinated via 'Lys-11'-linked ubiquitination on Lys-46 and Lys-58; impairing the recruitment of guanosine diphosphate (GDP) dissociation inhibitor 1/GDI1. As to expression, highest levels found in lung, kidney, whole brain and spinal cord. Expressed in all tissues tested including Sertoli and germ cells (at protein level). Also detected in osteoclasts.

It localises to the cell membrane. Its subcellular location is the cytoplasmic vesicle membrane. The protein resides in the cell junction. It is found in the tight junction. The protein localises to the golgi apparatus. It localises to the trans-Golgi network membrane. Its subcellular location is the recycling endosome membrane. The protein resides in the cell projection. It is found in the lamellipodium. The enzyme catalyses GTP + H2O = GDP + phosphate + H(+). With respect to regulation, regulated by guanine nucleotide exchange factors (GEFs) including DENND1C, which promote the exchange of bound GDP for free GTP. Regulated by GTPase activating proteins (GAPs) which increase the GTP hydrolysis activity. Inhibited by GDP dissociation inhibitors (GDIs). Activated in response to insulin. In terms of biological role, the small GTPases Rab are key regulators of intracellular membrane trafficking, from the formation of transport vesicles to their fusion with membranes. Rabs cycle between an inactive GDP-bound form and an active GTP-bound form that is able to recruit to membranes different sets of downstream effectors directly responsible for vesicle formation, movement, tethering and fusion. RAB13 is involved in endocytic recycling and regulates the transport to the plasma membrane of transmembrane proteins like the tight junction protein OCLN/occludin. Thereby, it regulates the assembly and the activity of tight junctions. Moreover, it may also regulate tight junction assembly by activating the PKA signaling pathway and by reorganizing the actin cytoskeleton through the activation of the downstream effectors PRKACA and MICALL2 respectively. Through its role in tight junction assembly, may play a role in the establishment of Sertoli cell barrier. Plays also a role in angiogenesis through regulation of endothelial cells chemotaxis. Also involved in neurite outgrowth. Has also been proposed to play a role in post-Golgi membrane trafficking from the TGN to the recycling endosome. Finally, it has been involved in insulin-induced transport to the plasma membrane of the glucose transporter GLUT4 and therefore may play a role in glucose homeostasis. The sequence is that of Ras-related protein Rab-13 from Rattus norvegicus (Rat).